Consider the following 179-residue polypeptide: GTP-dependent dephospho-CoA kinase (179 aa).

Aspartate 50, valine 51, valine 52, aspartate 69, lysine 71, and glutamate 126 together coordinate GTP.

The protein belongs to the GTP-dependent DPCK family.

The catalysed reaction is 3'-dephospho-CoA + GTP = GDP + CoA + H(+). It participates in cofactor biosynthesis; coenzyme A biosynthesis. In terms of biological role, catalyzes the GTP-dependent phosphorylation of the 3'-hydroxyl group of dephosphocoenzyme A to form coenzyme A (CoA). The chain is GTP-dependent dephospho-CoA kinase from Pyrococcus horikoshii (strain ATCC 700860 / DSM 12428 / JCM 9974 / NBRC 100139 / OT-3).